A 2546-amino-acid chain; its full sequence is Formin-J (2546 aa).

Disordered regions lie at residues 1–40 (MEEN…SFVK), 61–108 (ENSN…PLSE), 188–270 (KNIT…PNSA), 369–414 (TTNN…SSSS), 502–541 (TNSF…TPNS), 802–849 (SSIS…NTRK), 879–898 (TSVP…NNNN), 987–1101 (TTNN…GGIG), 1485–1529 (PKSK…ASLS), 1558–1601 (KRSK…FKSP), 1659–1775 (INNI…KVNS), 1840–1869 (VPTT…ETQS), and 2014–2033 (SNLS…SSLE). 2 stretches are compositionally biased toward low complexity: residues 16–37 (NNNE…SSSS) and 62–98 (NSNN…NSTS). 2 stretches are compositionally biased toward polar residues: residues 99–108 (GSKDNTPLSE) and 188–198 (KNITPSKNNSP). 2 stretches are compositionally biased toward low complexity: residues 203-237 (NNNN…NNNN) and 247-270 (NKNS…PNSA). A compositionally biased stretch (polar residues) spans 377-389 (AESLTTYSESSEI). 2 stretches are compositionally biased toward low complexity: residues 390–414 (STDS…SSSS) and 502–513 (TNSFGSSTTTTI). Residues 391–444 (TDSTGVCSSSSSTSSTLSSKSSSSSSFNKFMEFLLIYIEDNDSTNGTWVNGNKL) enclose the FHA domain. Residues 457–963 (KITLSTPDFS…SSISNEQEYQ (507 aa)) enclose the GBD/FH3 domain. Composition is skewed to polar residues over residues 879–891 (TSVP…KNPL) and 992–1007 (SSAK…NKSP). Residues 1033–1042 (VPPPPPPPPG) show a composition bias toward pro residues. The segment covering 1043–1056 (GNNNNESDVPSSSG) has biased composition (low complexity). Residues 1057–1097 (GPPPPPPPPPPPGKSSGGGPPPPPPPPPKGGKGGPPPPPPI) show a composition bias toward pro residues. Residues 1072–1098 (SGGGPPPPPPPPPKGGKGGPPPPPPIG) form the FH1 domain. One can recognise an FH2 domain in the interval 1106-1495 (KVKEEQPSVP…KSKKYQEQQN (390 aa)). A compositionally biased stretch (polar residues) spans 1492 to 1502 (EQQNKPTQNND). The segment covering 1507 to 1529 (SKLSNLPSSSSINDESSSSASLS) has biased composition (low complexity). Residues 1563–1593 (EQEPVVEPIQITPKVGSAASAEPSPSIKSRD) form the DAD domain. Positions 1665–1679 (SSSSSSSSSSSSSSS) are enriched in low complexity. The span at 1687–1717 (HNTESEIKKEFISNSSMDKDKEKIKEKEKGT) shows a compositional bias: basic and acidic residues. Low complexity predominate over residues 1732–1745 (KSTTTSPSSSSSKK). Residues 1746-1757 (QIPSLSECLQES) show a composition bias toward polar residues. Low complexity-rich tracts occupy residues 1763 to 1775 (RSSS…KVNS) and 1841 to 1853 (PTTT…TTQT). Positions 2067 to 2118 (IDDNQQKQQKQQQQQQQQQQQQQQLPQPQQQQQQQQQQQQQQQQQQQQQQQQ) form a coiled coil. The span at 2121-2154 (QQSTTTTTISTHHPQLKQVQPQSPSSLSQQPTQQ) shows a compositional bias: low complexity. 3 disordered regions span residues 2121 to 2369 (QQST…PKTV), 2381 to 2473 (SHKK…SYSS), and 2485 to 2510 (SPSS…LKTP). A compositionally biased stretch (polar residues) spans 2160 to 2179 (QPSSPLQSHYKPQQKPQTTY). Low complexity-rich tracts occupy residues 2188–2206 (ANPF…SNAS) and 2237–2256 (SSAS…TPLS). Residues 2274–2287 (TPPSSSISNSTATT) show a composition bias toward polar residues. Low complexity predominate over residues 2302–2315 (SPSSSSLEQSSNAS). Residues 2332-2342 (FKKHKKSHSKS) are compositionally biased toward basic residues. Composition is skewed to low complexity over residues 2388–2439 (VDQS…SSSS), 2459–2473 (NISS…SYSS), and 2485–2497 (SPSS…KPSP). Polar residues predominate over residues 2499-2508 (AVSSTSSTLK).

Belongs to the formin homology family. Diaphanous subfamily. Interacts (via GBD/FH3 domain) with activated Rho-GTPases.

Functionally, formins play an important role in the nucleation of actin and the formation of linear actin filaments. In Dictyostelium discoideum (Social amoeba), this protein is Formin-J (forJ).